The sequence spans 295 residues: 4-hydroxy-tetrahydrodipicolinate synthase (295 aa).

Residue threonine 46 participates in pyruvate binding. Tyrosine 134 (proton donor/acceptor) is an active-site residue. Catalysis depends on lysine 162, which acts as the Schiff-base intermediate with substrate. Pyruvate is bound at residue isoleucine 205.

This sequence belongs to the DapA family. As to quaternary structure, homotetramer; dimer of dimers.

The protein localises to the cytoplasm. The enzyme catalyses L-aspartate 4-semialdehyde + pyruvate = (2S,4S)-4-hydroxy-2,3,4,5-tetrahydrodipicolinate + H2O + H(+). It functions in the pathway amino-acid biosynthesis; L-lysine biosynthesis via DAP pathway; (S)-tetrahydrodipicolinate from L-aspartate: step 3/4. In terms of biological role, catalyzes the condensation of (S)-aspartate-beta-semialdehyde [(S)-ASA] and pyruvate to 4-hydroxy-tetrahydrodipicolinate (HTPA). This Anaeromyxobacter sp. (strain Fw109-5) protein is 4-hydroxy-tetrahydrodipicolinate synthase.